The following is a 290-amino-acid chain: MDKIIKSIAQSGSFRAYVLDSTETVALAQEKHNTLSSSTVALGRTLIANQILAANQKGDSRITVKVIGDSSFGHIISVADTKGHVKGYIQNTGVDIKKTATGEVLVGPFMGNGHFVTIIDYGTGNPYTSTTPLITGEIGEDFAYYLTESEQTPSAIGLNVLLDENDKVKVAGGFMVQVLPGASEEEVARYEKRLQEMPAISHLLASKNHVDALLEAIYGDEPYKRLSEEPLSFQCDCSRERFEAALMTLPKADLQAMIDEDKGAEIVCQFCGTKYQFNESDLEAIINDKA.

Cystine bridges form between C235-C237 and C268-C271.

The protein belongs to the HSP33 family. Post-translationally, under oxidizing conditions two disulfide bonds are formed involving the reactive cysteines. Under reducing conditions zinc is bound to the reactive cysteines and the protein is inactive.

It localises to the cytoplasm. Redox regulated molecular chaperone. Protects both thermally unfolding and oxidatively damaged proteins from irreversible aggregation. Plays an important role in the bacterial defense system toward oxidative stress. The protein is 33 kDa chaperonin of Streptococcus pyogenes serotype M12 (strain MGAS2096).